The following is a 573-amino-acid chain: Delta 8-(E)-sphingolipid desaturase (573 aa).

The Cytochrome b5 heme-binding domain occupies 2–77; that stretch reads SRVLSRRDIA…FKIWKIGRID (76 aa). Heme contacts are provided by histidine 37 and histidine 60. Residues 228–248 form a helical membrane-spanning segment; it reads LFGISFYLLSLKWFAISAICL. The Histidine box-1 signature appears at 260 to 264; that stretch reads HDAGH. Residues 273–293 traverse the membrane as a helical segment; it reads VDNIIGMTVASWIGGLSLGWW. Residues 297–301 carry the Histidine box-2 motif; that stretch reads HNVHH. A run of 3 helical transmembrane segments spans residues 353-372, 393-413, and 422-442; these read YLYY…LSWM, LAGL…KQMP, and VMIS…SHFA. A Histidine box-3 motif is present at residues 481-485; that stretch reads QVIHH.

It belongs to the fatty acid desaturase type 1 family.

Its subcellular location is the membrane. It carries out the reaction an N-acylsphing-4-enine + 2 Fe(II)-[cytochrome b5] + O2 + 2 H(+) = a (4E,8E)-4-sphinga-4,8-dienine ceramide + 2 Fe(III)-[cytochrome b5] + 2 H2O. Its pathway is lipid metabolism; sphingolipid metabolism. In terms of biological role, delta(8)-fatty-acid desaturase which introduces a double bond at the 8-position in the long-chain base (LCB) of ceramides. Required for the formation of the di-unsaturated sphingoid base (E,E)-sphinga-4,8-dienine during glucosylceramide (GluCer) biosynthesis. The protein is Delta 8-(E)-sphingolipid desaturase of Kluyveromyces lactis (strain ATCC 8585 / CBS 2359 / DSM 70799 / NBRC 1267 / NRRL Y-1140 / WM37) (Yeast).